Consider the following 427-residue polypeptide: Enolase (427 aa).

Q162 contributes to the (2R)-2-phosphoglycerate binding site. The active-site Proton donor is the E204. Mg(2+) contacts are provided by D241, E284, and D311. (2R)-2-phosphoglycerate-binding residues include K336, R365, S366, and K387. The active-site Proton acceptor is the K336.

Belongs to the enolase family. Requires Mg(2+) as cofactor.

It localises to the cytoplasm. The protein localises to the secreted. It is found in the cell surface. The catalysed reaction is (2R)-2-phosphoglycerate = phosphoenolpyruvate + H2O. It participates in carbohydrate degradation; glycolysis; pyruvate from D-glyceraldehyde 3-phosphate: step 4/5. Catalyzes the reversible conversion of 2-phosphoglycerate (2-PG) into phosphoenolpyruvate (PEP). It is essential for the degradation of carbohydrates via glycolysis. The chain is Enolase from Corynebacterium kroppenstedtii (strain DSM 44385 / JCM 11950 / CIP 105744 / CCUG 35717).